Consider the following 129-residue polypeptide: MDLDVKEIIKNMNLKFRNIEGKKLLLAISTDKYGNVLMTAFMSEESLKKSIETGFMHYYSTSRDKLWRKGEESGNIQKIINVFRDCDGDALLFTVEQTGWACHEGYMSCFHNKIDLNTGKSTVVGNKLD.

Mg(2+) is bound at residue Asp85. A Zn(2+)-binding site is contributed by Cys86. Residues Asp87 and Asp89 each coordinate Mg(2+). Zn(2+) is bound by residues Cys102 and Cys109.

Belongs to the PRA-CH family. As to quaternary structure, homodimer. It depends on Mg(2+) as a cofactor. Requires Zn(2+) as cofactor.

It is found in the cytoplasm. It catalyses the reaction 1-(5-phospho-beta-D-ribosyl)-5'-AMP + H2O = 1-(5-phospho-beta-D-ribosyl)-5-[(5-phospho-beta-D-ribosylamino)methylideneamino]imidazole-4-carboxamide. The protein operates within amino-acid biosynthesis; L-histidine biosynthesis; L-histidine from 5-phospho-alpha-D-ribose 1-diphosphate: step 3/9. Its function is as follows. Catalyzes the hydrolysis of the adenine ring of phosphoribosyl-AMP. This chain is Phosphoribosyl-AMP cyclohydrolase, found in Methanococcus maripaludis (strain C6 / ATCC BAA-1332).